We begin with the raw amino-acid sequence, 397 residues long: Xyloglucan O-acetyltransferase 3 (397 aa).

The Cytoplasmic portion of the chain corresponds to 1–3; sequence MNR. The helical; Signal-anchor for type II membrane protein transmembrane segment at 4-24 threads the bilayer; that stretch reads FFYTVGLIFLFSFFILYSPKT. Residues 25 to 397 are Lumenal-facing; it reads SDLSNNVDLH…RHAFTDFTWS (373 aa). 4 cysteine pairs are disulfide-bonded: Cys-48–Cys-98, Cys-69–Cys-134, Cys-78–Cys-370, and Cys-293–Cys-366. The N-linked (GlcNAc...) asparagine glycan is linked to Asn-66. Residues 121 to 123 carry the GDS motif motif; that stretch reads GDS. Ser-123 serves as the catalytic Nucleophile. 3 N-linked (GlcNAc...) asparagine glycosylation sites follow: Asn-162, Asn-182, and Asn-294. Asp-365 functions as the Proton donor in the catalytic mechanism. A DXXH motif motif is present at residues 365-368; it reads DCVH. Residue His-368 is the Proton acceptor of the active site.

Belongs to the PC-esterase family. TBL subfamily.

The protein localises to the golgi apparatus membrane. Xyloglucan acetyltransferase that catalyzes the acetylation of fucosylated Gal residues on xyloglucan side chains. Predominantly catalyze 6-O-monoacetylation of Gal residues in the Fuc-Gal-Xyl trisaccharide side chains of xyloglucan oligomers. The protein is Xyloglucan O-acetyltransferase 3 of Populus trichocarpa (Western balsam poplar).